The following is a 206-amino-acid chain: MTYIVGLTGGIGSGKTTIANLFTDLGVPLVDADVVAREVVAKDSPLLSKIVEHFGAQILTEQGELNRAALRERVFNHDEDKLWLNNLLHPAIRERMKQKLAEQTAPYTLFVVPLLIENKLTALCDRILVVDVSPQTQLARSSQRDNNNFEQIQRIMNSQVSQQERLKWADDVINNDSELAQNLPHLQQKVLELHQFYLQQAENKNA.

In terms of domain architecture, DPCK spans 4 to 204 (IVGLTGGIGS…QFYLQQAENK (201 aa)). 12-17 (GSGKTT) contributes to the ATP binding site.

It belongs to the CoaE family.

It localises to the cytoplasm. It catalyses the reaction 3'-dephospho-CoA + ATP = ADP + CoA + H(+). It participates in cofactor biosynthesis; coenzyme A biosynthesis; CoA from (R)-pantothenate: step 5/5. Its function is as follows. Catalyzes the phosphorylation of the 3'-hydroxyl group of dephosphocoenzyme A to form coenzyme A. The sequence is that of Dephospho-CoA kinase from Haemophilus influenzae (strain 86-028NP).